The primary structure comprises 275 residues: NH(3)-dependent NAD(+) synthetase (275 aa).

50–57 (GISGGVDS) contributes to the ATP binding site. Asp-56 contributes to the Mg(2+) binding site. Residue Arg-147 participates in deamido-NAD(+) binding. Thr-167 provides a ligand contact to ATP. Glu-172 lines the Mg(2+) pocket. The deamido-NAD(+) site is built by Lys-180 and Asp-187. Residues Lys-196 and Thr-218 each coordinate ATP. Residue 267 to 268 (HK) coordinates deamido-NAD(+).

This sequence belongs to the NAD synthetase family. Homodimer.

It carries out the reaction deamido-NAD(+) + NH4(+) + ATP = AMP + diphosphate + NAD(+) + H(+). It participates in cofactor biosynthesis; NAD(+) biosynthesis; NAD(+) from deamido-NAD(+) (ammonia route): step 1/1. Its function is as follows. Catalyzes the ATP-dependent amidation of deamido-NAD to form NAD. Uses ammonia as a nitrogen source. The protein is NH(3)-dependent NAD(+) synthetase of Pseudomonas putida (strain ATCC 47054 / DSM 6125 / CFBP 8728 / NCIMB 11950 / KT2440).